The following is a 337-amino-acid chain: GTPase Obg (337 aa).

In terms of domain architecture, Obg spans 1 to 161 (MNLTDNAVIF…FKIKLDFVFL (161 aa)). Positions 162 to 333 (ADVGLFGYSN…LINKILLFLE (172 aa)) constitute an OBG-type G domain. Residues 168–175 (GYSNTGRS), 193–197 (FTTLF), 214–217 (DIPS), 282–285 (NKTD), and 314–316 (SLN) each bind GTP. The Mg(2+) site is built by serine 175 and threonine 195.

The protein belongs to the TRAFAC class OBG-HflX-like GTPase superfamily. OBG GTPase family. Monomer. Mg(2+) is required as a cofactor.

It is found in the cytoplasm. Its function is as follows. An essential GTPase which binds GTP, GDP and possibly (p)ppGpp with moderate affinity, with high nucleotide exchange rates and a fairly low GTP hydrolysis rate. Plays a role in control of the cell cycle, stress response, ribosome biogenesis and in those bacteria that undergo differentiation, in morphogenesis control. In Wigglesworthia glossinidia brevipalpis, this protein is GTPase Obg.